Consider the following 339-residue polypeptide: Ribosomal RNA small subunit methyltransferase H (339 aa).

S-adenosyl-L-methionine contacts are provided by residues 52-54 (GGH), aspartate 71, phenylalanine 98, aspartate 130, and glutamine 137.

The protein belongs to the methyltransferase superfamily. RsmH family.

Its subcellular location is the cytoplasm. The enzyme catalyses cytidine(1402) in 16S rRNA + S-adenosyl-L-methionine = N(4)-methylcytidine(1402) in 16S rRNA + S-adenosyl-L-homocysteine + H(+). Functionally, specifically methylates the N4 position of cytidine in position 1402 (C1402) of 16S rRNA. The chain is Ribosomal RNA small subunit methyltransferase H from Corynebacterium diphtheriae (strain ATCC 700971 / NCTC 13129 / Biotype gravis).